A 220-amino-acid chain; its full sequence is N-(5'-phosphoribosyl)anthranilate isomerase (220 aa).

It belongs to the TrpF family.

It carries out the reaction N-(5-phospho-beta-D-ribosyl)anthranilate = 1-(2-carboxyphenylamino)-1-deoxy-D-ribulose 5-phosphate. It participates in amino-acid biosynthesis; L-tryptophan biosynthesis; L-tryptophan from chorismate: step 3/5. The protein is N-(5'-phosphoribosyl)anthranilate isomerase of Agrobacterium fabrum (strain C58 / ATCC 33970) (Agrobacterium tumefaciens (strain C58)).